A 233-amino-acid polypeptide reads, in one-letter code: MTPHINAKIGDFHPQCILCGDPLRVSYIAKNFLQDAREITNVRNMLGFSGKYKGKEISLMGHGMGIASCTIYVTELVKTYQVKELLRIGTCGAISPKVGLRDIIMVTGASTDSKTNRIRFLNHDLSATPDFELSLRAYQTAKRLEIDLKVGNIFTSDFFYSFETHAFDLLAKYNHLGIEMEAAGLYATAMELSAKALCLCSVSDHLITKEALSPKERIESFNNMIILALEMMG.

His-4 is a binding site for a purine D-ribonucleoside. Phosphate is bound by residues Gly-20, Arg-24, Arg-43, and 87-90 (RIGT). A purine D-ribonucleoside is bound by residues 179–181 (EME) and 203–204 (SD). The active-site Proton donor is the Asp-204.

It belongs to the PNP/UDP phosphorylase family. Homohexamer; trimer of homodimers.

It carries out the reaction a purine D-ribonucleoside + phosphate = a purine nucleobase + alpha-D-ribose 1-phosphate. It catalyses the reaction a purine 2'-deoxy-D-ribonucleoside + phosphate = a purine nucleobase + 2-deoxy-alpha-D-ribose 1-phosphate. In terms of biological role, catalyzes the reversible phosphorolytic breakdown of the N-glycosidic bond in the beta-(deoxy)ribonucleoside molecules, with the formation of the corresponding free purine bases and pentose-1-phosphate. The sequence is that of Purine nucleoside phosphorylase DeoD-type from Helicobacter acinonychis (strain Sheeba).